Consider the following 514-residue polypeptide: Leucine-rich repeat-containing protein 14B (514 aa).

One copy of the LRR 1; degenerate repeat lies at 104–141 (RRRLRVADLTGIRDVQVQRCPCGRALGRWGRTQLLART). Residues 185-209 (RVHCPSFRADSLSPSQLLHVLRLAG) form an LRR 2; degenerate repeat. One copy of the LRR 4; degenerate repeat lies at 238 to 277 (FPRLASLTLPTKAFDAPPTYASTPDGEDPLLASIARELSK). 5 LRR repeats span residues 278-302 (MAQLTELSVAFSTLTGKIPTLLGPL), 303-334 (QTPLRVLDLANCALNHTDMAFLADCAHAAHLE), 335-350 (VLDLSGHNLVSLYPST), 359-386 (SRTLRILTLEECGIVDSHVGMLILGLSP), and 387-411 (CHRLRQLKFLGNPLSARALRRLFTA).

It belongs to the PRAME family. LRRC14 subfamily.

The sequence is that of Leucine-rich repeat-containing protein 14B from Homo sapiens (Human).